The sequence spans 123 residues: Dormancy-associated protein homolog 4 (123 aa).

Residues Leu-7–Thr-86 are disordered. The segment covering Leu-30–Thr-46 has biased composition (low complexity). Composition is skewed to polar residues over residues Arg-47 to Val-58 and Pro-71 to Thr-80. The residue at position 74 (Ser-74) is a Phosphoserine.

The protein belongs to the DRM1/ARP family.

In Arabidopsis thaliana (Mouse-ear cress), this protein is Dormancy-associated protein homolog 4.